Consider the following 241-residue polypeptide: 4-hydroxy-tetrahydrodipicolinate reductase (241 aa).

Residues 7 to 12, 74 to 76, and 98 to 101 each bind NAD(+); these read GVNGHM, GTT, and STNM. His131 acts as the Proton donor/acceptor in catalysis. His132 lines the (S)-2,3,4,5-tetrahydrodipicolinate pocket. Lys135 functions as the Proton donor in the catalytic mechanism. Position 141-142 (141-142) interacts with (S)-2,3,4,5-tetrahydrodipicolinate; that stretch reads GS.

Belongs to the DapB family.

The protein localises to the cytoplasm. It carries out the reaction (S)-2,3,4,5-tetrahydrodipicolinate + NAD(+) + H2O = (2S,4S)-4-hydroxy-2,3,4,5-tetrahydrodipicolinate + NADH + H(+). It catalyses the reaction (S)-2,3,4,5-tetrahydrodipicolinate + NADP(+) + H2O = (2S,4S)-4-hydroxy-2,3,4,5-tetrahydrodipicolinate + NADPH + H(+). It participates in amino-acid biosynthesis; L-lysine biosynthesis via DAP pathway; (S)-tetrahydrodipicolinate from L-aspartate: step 4/4. Catalyzes the conversion of 4-hydroxy-tetrahydrodipicolinate (HTPA) to tetrahydrodipicolinate. The protein is 4-hydroxy-tetrahydrodipicolinate reductase of Alkaliphilus oremlandii (strain OhILAs) (Clostridium oremlandii (strain OhILAs)).